The following is a 195-amino-acid chain: U8 snoRNA-decapping enzyme (195 aa).

The Nudix hydrolase domain maps to 18–173 (DWRHACHALL…IGAAREQLLE (156 aa)). Residues H24, R50, and F57 each contribute to the substrate site. Mn(2+) contacts are provided by G59, E76, E80, and H99. A Nudix box motif is present at residues 61–82 (FVDAQDSCLEDGLNRELREELG). Residue Q170 coordinates substrate. Mn(2+) is bound at residue E173.

It belongs to the Nudix hydrolase family. NUDT16 subfamily. Homodimer. The cofactor is Mg(2+). Mn(2+) serves as cofactor. It depends on Co(2+) as a cofactor. In terms of tissue distribution, expressed in brain, testis, spleen, lung, heart, liver, kidney and muscle (at protein level).

Its subcellular location is the nucleus. It localises to the nucleolus. The protein resides in the nucleoplasm. It is found in the cytoplasm. It catalyses the reaction a 5'-end (N(7)-methyl 5'-triphosphoguanosine)-ribonucleoside in mRNA + H2O = N(7)-methyl-GDP + a 5'-end phospho-ribonucleoside in mRNA + 2 H(+). It carries out the reaction IDP + H2O = IMP + phosphate + H(+). The enzyme catalyses dIDP + H2O = dIMP + phosphate + H(+). The catalysed reaction is a 5'-end NAD(+)-phospho-ribonucleoside in mRNA + H2O = a 5'-end phospho-ribonucleoside in mRNA + NAD(+) + H(+). It catalyses the reaction a 5'-end FAD-phospho-ribonucleoside in mRNA + H2O = a 5'-end phospho-adenosine-phospho-ribonucleoside in mRNA + FMN + 2 H(+). It carries out the reaction a 5'-end CoA-ribonucleoside in mRNA + H2O = a 5'-end phospho-adenosine-phospho-ribonucleoside in mRNA + (R)-4'-phosphopantetheine + 2 H(+). Its function is as follows. RNA-binding and decapping enzyme that catalyzes the cleavage of the cap structure of snoRNAs and mRNAs in a metal-dependent manner. Part of the U8 snoRNP complex that is required for the accumulation of mature 5.8S and 28S rRNA. Has diphosphatase activity and removes m7G and/or m227G caps from U8 snoRNA and leaves a 5'monophosphate on the RNA. Also catalyzes the cleavage of the cap structure on mRNAs. Does not hydrolyze cap analog structures like 7-methylguanosine nucleoside triphosphate (m7GpppG). Also hydrolysis m7G- and m227G U3-capped RNAs but with less efficiencies. Has broad substrate specificity with manganese or cobalt as cofactor and can act on various RNA species. Binds to the U8 snoRNA; metal is not required for RNA-binding. May play a role in the regulation of snoRNAs and mRNAs degradation. Also acts as a phosphatase; hydrolyzes the non-canonical purine nucleotides inosine diphosphate (IDP) and deoxyinosine diphosphate (dITP) as well as guanosine diphosphate (GDP), deoxyguanosine diphosphate (dGDP), xanthine diphosphate (XDP), inosine triphosphate (ITP) and deoxyinosine triphosphate (ITP) to their respective monophosphate derivatives and does not distinguish between the deoxy- and ribose forms. The order of activity with different substrates is IDP &gt; dIDP &gt;&gt; GDP = dGDP &gt; XDP = ITP = dITP. Binds strongly to GTP, ITP and XTP. Participates in the hydrolysis of dIDP/IDP and probably excludes non-canonical purines from RNA and DNA precursor pools, thus preventing their incorporation into RNA and DNA and avoiding chromosomal lesions. Exhibits decapping activity towards NAD-capped RNAs and FAD-capped RNAs. Exhibits decapping activity towards dpCoA-capped RNAs in vitro. This Mus musculus (Mouse) protein is U8 snoRNA-decapping enzyme (Nudt16).